A 145-amino-acid chain; its full sequence is 3-dehydroquinate dehydratase (145 aa).

The active-site Proton acceptor is tyrosine 23. The substrate site is built by asparagine 75, histidine 81, and aspartate 88. The active-site Proton donor is the histidine 101. Residues 102-103 (LS) and arginine 112 contribute to the substrate site.

It belongs to the type-II 3-dehydroquinase family. In terms of assembly, homododecamer.

The catalysed reaction is 3-dehydroquinate = 3-dehydroshikimate + H2O. It functions in the pathway metabolic intermediate biosynthesis; chorismate biosynthesis; chorismate from D-erythrose 4-phosphate and phosphoenolpyruvate: step 3/7. Functionally, catalyzes a trans-dehydration via an enolate intermediate. In Legionella pneumophila (strain Paris), this protein is 3-dehydroquinate dehydratase.